The sequence spans 227 residues: Guanylate kinase (227 aa).

A Guanylate kinase-like domain is found at 21–199; sequence GNLFMVVAPS…ALAELECIVA (179 aa). Residue 28-35 participates in ATP binding; it reads APSGAGKS.

Belongs to the guanylate kinase family.

The protein resides in the cytoplasm. It catalyses the reaction GMP + ATP = GDP + ADP. Functionally, essential for recycling GMP and indirectly, cGMP. This is Guanylate kinase from Burkholderia thailandensis (strain ATCC 700388 / DSM 13276 / CCUG 48851 / CIP 106301 / E264).